Consider the following 146-residue polypeptide: Ribonuclease H (146 aa).

The 141-residue stretch at 1–141 (MKKVQLITDG…CDELATRAAR (141 aa)) folds into the RNase H type-1 domain. Residues Asp-9, Glu-47, Asp-69, and Asp-133 each contribute to the Mg(2+) site.

Belongs to the RNase H family. Monomer. Mg(2+) is required as a cofactor.

The protein resides in the cytoplasm. The enzyme catalyses Endonucleolytic cleavage to 5'-phosphomonoester.. Endonuclease that specifically degrades the RNA of RNA-DNA hybrids. The sequence is that of Ribonuclease H from Solibacter usitatus (strain Ellin6076).